The sequence spans 614 residues: Cathepsin F (614 aa).

A signal peptide spans 1-20 (MRLFAAATVALVLLLGQAAG). Residues 21–393 (EELAEERAGQ…AAVVPAYHGE (373 aa)) constitute a propeptide, activation peptide. The segment at 25-50 (EERAGQAQGDAESTESSETTTDQAVS) is disordered. Residues 29 to 45 (GQAQGDAESTESSETTT) are compositionally biased toward low complexity. N151 carries an N-linked (GlcNAc...) asparagine glycan. Cystine bridges form between C415–C456 and C449–C489. C418 is an active-site residue. Residues N492 and N510 are each glycosylated (N-linked (GlcNAc...) asparagine). A disulfide bridge connects residues C548 and C602. Residues H555 and N581 contribute to the active site.

This sequence belongs to the peptidase C1 family.

The enzyme catalyses The recombinant enzyme cleaves synthetic substrates with Phe and Leu (better than Val) in P2, with high specificity constant (kcat/Km) comparable to that of cathepsin L.. May have a role in autophagic cell death. This chain is Cathepsin F, found in Drosophila melanogaster (Fruit fly).